The sequence spans 710 residues: MLNPIVQKFQYGQHTVTLETGMMARQATAAVMVSMDDTAVFVTVVGQKKAKPGQGFFPLTVNYQERTYAAGRIPGSFFRREGRPSEGETLTSRLIDRPIRPLFPEGFVNEVQVIATVVSVNPQVNPDIVAMIGASAALALSGLPFNGPIGAARVGYLNDQYVLNPTSDELKESKLDLVVAGTKGAVLMVESEAELLSEDQMLGAVVFGHDQQQIVIDNINALVAEAGKPRWDWQPEAVNEALRSRITALAESRLSDAYRITEKQERYAQVDVIKSETSAALLAEDEALDAAEISDLLHALEKDVVRSRILRGEPRIDGREKDMIRGLDVRTGVLPRTHGSALFTRGETQALVTATLGTARDAQNLDELMGERTDNFLFHYNFPPYSVGETGMVGSPKRREIGHGRLAKRGVLAVMPKGDAFPYTVRVVSEITESNGSSSMASVCGASLALMDAGVPIKAAVAGIAMGLVKDENNFVVLSDILGDEDHLGDMDFKVAGSREGITALQMDIKIEGITREIMQVALNQAKGARLHILGVMEQAISGPRGDISQFAPRIHTIKISVDKIKDVIGKGGSVIRALTEETGTTIEIEDDGTVKIAATDGDKAKFAIRRIEEITAEIEVGRIYNGKVTRIVDFGAFVAIGGGKEGLVHISQIADKRVEKVTDYLQMGQEVPVKVLEVDRQGRVRLSIKEAGEQAQPEAEAVPAAPEAE.

Residues aspartate 486 and aspartate 492 each coordinate Mg(2+). The 60-residue stretch at 553 to 612 folds into the KH domain; sequence PRIHTIKISVDKIKDVIGKGGSVIRALTEETGTTIEIEDDGTVKIAATDGDKAKFAIRRI. An S1 motif domain is found at 622–690; the sequence is GRIYNGKVTR…RQGRVRLSIK (69 aa). Residues 690-710 are disordered; the sequence is KEAGEQAQPEAEAVPAAPEAE. A compositionally biased stretch (low complexity) spans 694 to 710; the sequence is EQAQPEAEAVPAAPEAE.

This sequence belongs to the polyribonucleotide nucleotidyltransferase family. In terms of assembly, component of the RNA degradosome, which is a multiprotein complex involved in RNA processing and mRNA degradation. The cofactor is Mg(2+).

Its subcellular location is the cytoplasm. The enzyme catalyses RNA(n+1) + phosphate = RNA(n) + a ribonucleoside 5'-diphosphate. Involved in mRNA degradation. Catalyzes the phosphorolysis of single-stranded polyribonucleotides processively in the 3'- to 5'-direction. The chain is Polyribonucleotide nucleotidyltransferase from Erwinia tasmaniensis (strain DSM 17950 / CFBP 7177 / CIP 109463 / NCPPB 4357 / Et1/99).